A 105-amino-acid polypeptide reads, in one-letter code: Putative regulatory protein COPRO5265_1186 (105 aa).

A disordered region spans residues 76 to 105 (RLEEEEEEEERTEPITEQEAELEEESGEDV). Over residues 78-105 (EEEEEEEERTEPITEQEAELEEESGEDV) the composition is skewed to acidic residues.

Belongs to the RemA family.

The sequence is that of Putative regulatory protein COPRO5265_1186 from Coprothermobacter proteolyticus (strain ATCC 35245 / DSM 5265 / OCM 4 / BT).